Reading from the N-terminus, the 392-residue chain is Phosphoglycerate kinase (392 aa).

Residues 26–28, arginine 41, 64–67, arginine 118, and arginine 151 contribute to the substrate site; these read DLN and HLGR. ATP-binding positions include lysine 202, glutamate 319, and 345 to 348; that span reads GGDT.

The protein belongs to the phosphoglycerate kinase family. Monomer.

It is found in the cytoplasm. It carries out the reaction (2R)-3-phosphoglycerate + ATP = (2R)-3-phospho-glyceroyl phosphate + ADP. The protein operates within carbohydrate degradation; glycolysis; pyruvate from D-glyceraldehyde 3-phosphate: step 2/5. The sequence is that of Phosphoglycerate kinase from Photobacterium profundum (strain SS9).